Consider the following 197-residue polypeptide: MNRRTAEVERYTLETQIRVQVDLDGTGKGKFRSGVHFLDHMLDQVARHGCMDLEVEAKGDLHIDAHHTVEDIGIALGQAFAKALGDKRGIHRYGHAYVPLDEALSRVVIDFSGRSGLFYEVEFPRDRIGDFEVDLFVEFFRGFVNHAQATLHIDNLKGLNAHHVAETIFKAFGRAVRAAVERDARTAGVLPSTKGLL.

It belongs to the imidazoleglycerol-phosphate dehydratase family.

Its subcellular location is the cytoplasm. The enzyme catalyses D-erythro-1-(imidazol-4-yl)glycerol 3-phosphate = 3-(imidazol-4-yl)-2-oxopropyl phosphate + H2O. Its pathway is amino-acid biosynthesis; L-histidine biosynthesis; L-histidine from 5-phospho-alpha-D-ribose 1-diphosphate: step 6/9. This is Imidazoleglycerol-phosphate dehydratase from Methylococcus capsulatus (strain ATCC 33009 / NCIMB 11132 / Bath).